The chain runs to 637 residues: Glutamate--cysteine ligase catalytic subunit (637 aa).

Residue M1 is modified to N-acetylmethionine. Phosphoserine is present on residues S5 and S8.

Belongs to the glutamate--cysteine ligase type 3 family. As to quaternary structure, heterodimer of a catalytic heavy chain and a regulatory light chain.

It carries out the reaction L-cysteine + L-glutamate + ATP = gamma-L-glutamyl-L-cysteine + ADP + phosphate + H(+). It catalyses the reaction (2S)-2-aminobutanoate + L-glutamate + ATP = gamma-L-glutamyl-(2S)-2-aminobutanoate + ADP + phosphate + H(+). The protein operates within sulfur metabolism; glutathione biosynthesis; glutathione from L-cysteine and L-glutamate: step 1/2. Its activity is regulated as follows. Feedback inhibition by glutathione. Its function is as follows. Catalyzes the ATP-dependent ligation of L-glutamate and L-cysteine and participates in the first and rate-limiting step in glutathione biosynthesis. The protein is Glutamate--cysteine ligase catalytic subunit of Homo sapiens (Human).